The primary structure comprises 450 residues: Perilipin-2 (450 aa).

N-acetylalanine is present on A2. Position 215 is a phosphoserine (S215). Y232 is subject to Phosphotyrosine. A disordered region spans residues 411 to 450 (ESESAQAPGTTRRPGRWSRKHPKPVPVSNAEGSQPDDSSS). Residues 423 to 433 (RPGRWSRKHPK) are compositionally biased toward basic residues. Residues 440–450 (AEGSQPDDSSS) are compositionally biased toward polar residues.

This sequence belongs to the perilipin family. Interacts with IRGC. Post-translationally, acylated; primarily with C14, C16 and C18 fatty acids. Phosphorylation at Tyr-232 by isoform 1 of CHKA (CHKalpha2) promotes dissociation from lipid droplets: dissociation is followed by recruitment of autophagosome machinery to lipid droplets and subsequent lipid droplet lipolysis. In terms of processing, polyubiquitination of Nt-acetylatable A-PLIN2 by MARCHF6 lead to degradation by 26S proteasomes. As to expression, milk lipid globules.

Its subcellular location is the membrane. The protein localises to the lipid droplet. Structural component of lipid droplets, which is required for the formation and maintenance of lipid storage droplets. The polypeptide is Perilipin-2 (PLIN2) (Bos taurus (Bovine)).